Here is a 629-residue protein sequence, read N- to C-terminus: tRNA uridine 5-carboxymethylaminomethyl modification enzyme MnmG (629 aa).

FAD is bound by residues 14 to 19 (GAGHAG), Val126, and Ser181. Residue 273–287 (GPRYCPSIEDKVVRF) coordinates NAD(+). Gln370 lines the FAD pocket.

It belongs to the MnmG family. Homodimer. Heterotetramer of two MnmE and two MnmG subunits. FAD serves as cofactor.

The protein resides in the cytoplasm. NAD-binding protein involved in the addition of a carboxymethylaminomethyl (cmnm) group at the wobble position (U34) of certain tRNAs, forming tRNA-cmnm(5)s(2)U34. The chain is tRNA uridine 5-carboxymethylaminomethyl modification enzyme MnmG from Bacillus cereus (strain ATCC 14579 / DSM 31 / CCUG 7414 / JCM 2152 / NBRC 15305 / NCIMB 9373 / NCTC 2599 / NRRL B-3711).